The chain runs to 564 residues: Mitochondrial distribution and morphology protein 34 (564 aa).

Residues 1-208 form the SMP-LTD domain; it reads MAFNFNWSPL…VPEYRDRESE (208 aa). Disordered regions lie at residues 208–240, 336–397, 404–423, 434–517, and 532–564; these read ESVN…NALN, SGGS…SAPT, QFSE…PQND, RISQ…DPRQ, and IQEE…AYGH. Residues 209 to 219 show a composition bias toward polar residues; it reads SVNTLDQSSGP. The span at 351–365 shows a compositional bias: basic residues; sequence SGRHPRPHGKKRKKR. Positions 366–376 are enriched in basic and acidic residues; that stretch reads VVDLRRPKTTD. The segment covering 380–390 has biased composition (low complexity); the sequence is SVSGESVFSSE. Polar residues-rich tracts occupy residues 438-462 and 477-503; these read GEHT…SRNS and PRNS…SSAI.

Belongs to the MDM34 family. As to quaternary structure, component of the ER-mitochondria encounter structure (ERMES) or MDM complex, composed of mmm1, mdm10, mdm12 and mdm34.

The protein resides in the mitochondrion outer membrane. In terms of biological role, component of the ERMES/MDM complex, which serves as a molecular tether to connect the endoplasmic reticulum (ER) and mitochondria. Components of this complex are involved in the control of mitochondrial shape and protein biogenesis, and function in nonvesicular lipid trafficking between the ER and mitochondria. Mdm34 is required for the interaction of the ER-resident membrane protein mmm1 and the outer mitochondrial membrane-resident beta-barrel protein mdm10. The sequence is that of Mitochondrial distribution and morphology protein 34 from Talaromyces stipitatus (strain ATCC 10500 / CBS 375.48 / QM 6759 / NRRL 1006) (Penicillium stipitatum).